Here is a 185-residue protein sequence, read N- to C-terminus: Elongation factor P 1 (185 aa).

Belongs to the elongation factor P family.

The protein localises to the cytoplasm. It functions in the pathway protein biosynthesis; polypeptide chain elongation. Its function is as follows. Involved in peptide bond synthesis. Stimulates efficient translation and peptide-bond synthesis on native or reconstituted 70S ribosomes in vitro. Probably functions indirectly by altering the affinity of the ribosome for aminoacyl-tRNA, thus increasing their reactivity as acceptors for peptidyl transferase. This chain is Elongation factor P 1 (efp1), found in Chlamydia pneumoniae (Chlamydophila pneumoniae).